The primary structure comprises 245 residues: Transmembrane protein 69 (245 aa).

A run of 5 helical transmembrane segments spans residues Ala97–Ile117, Ile122–Gly142, Tyr159–Ser179, Ala185–Pro205, and Ile216–Tyr236.

The protein resides in the membrane. The polypeptide is Transmembrane protein 69 (Tmem69) (Mus musculus (Mouse)).